The chain runs to 205 residues: Outer-membrane lipoprotein carrier protein (205 aa).

The signal sequence occupies residues 1 to 21 (MRFLAVATMVVALMVPWSVRA).

The protein belongs to the LolA family. As to quaternary structure, monomer.

The protein localises to the periplasm. Participates in the translocation of lipoproteins from the inner membrane to the outer membrane. Only forms a complex with a lipoprotein if the residue after the N-terminal Cys is not an aspartate (The Asp acts as a targeting signal to indicate that the lipoprotein should stay in the inner membrane). This Methylobacillus flagellatus (strain ATCC 51484 / DSM 6875 / VKM B-1610 / KT) protein is Outer-membrane lipoprotein carrier protein.